The sequence spans 831 residues: Periplasmic nitrate reductase (831 aa).

The tat-type signal signal peptide spans 1–29; sequence MTLTRRDLIKAQAAATAAAAAGLPVSALA. A 4Fe-4S Mo/W bis-MGD-type domain is found at 41-97; that stretch reads IRWSKAPCRFCGTGCGVMVGTRDGQVVATHGDTQAEVNRGLNCVKGYFLSKIMYGED. 4 residues coordinate [4Fe-4S] cluster: cysteine 48, cysteine 51, cysteine 55, and cysteine 83. Residues lysine 85, glutamine 152, asparagine 177, cysteine 181, 214 to 221, 245 to 249, 264 to 266, methionine 375, glutamine 379, asparagine 485, 511 to 512, lysine 534, aspartate 561, and 721 to 730 each bind Mo-bis(molybdopterin guanine dinucleotide); these read WGSNMAEM, STFTH, GTD, SD, and TGRVLEHWHS. Residue tryptophan 797 participates in substrate binding. Positions 805 and 822 each coordinate Mo-bis(molybdopterin guanine dinucleotide).

This sequence belongs to the prokaryotic molybdopterin-containing oxidoreductase family. NasA/NapA/NarB subfamily. As to quaternary structure, component of the periplasmic nitrate reductase NapAB complex composed of NapA and NapB. Requires [4Fe-4S] cluster as cofactor. The cofactor is Mo-bis(molybdopterin guanine dinucleotide). In terms of processing, predicted to be exported by the Tat system. The position of the signal peptide cleavage has not been experimentally proven.

Its subcellular location is the periplasm. It catalyses the reaction 2 Fe(II)-[cytochrome] + nitrate + 2 H(+) = 2 Fe(III)-[cytochrome] + nitrite + H2O. Functionally, catalytic subunit of the periplasmic nitrate reductase complex NapAB. Receives electrons from NapB and catalyzes the reduction of nitrate to nitrite. This chain is Periplasmic nitrate reductase, found in Cereibacter sphaeroides (strain ATCC 17023 / DSM 158 / JCM 6121 / CCUG 31486 / LMG 2827 / NBRC 12203 / NCIMB 8253 / ATH 2.4.1.) (Rhodobacter sphaeroides).